A 422-amino-acid chain; its full sequence is Cytokine receptor-like factor 1 (422 aa).

Residues 1–37 form the signal peptide; that stretch reads MPAGRRGPAAQSARRPPPLLPLLLLLCVLGAPRAGSG. The Ig-like C2-type domain occupies 38–131; that stretch reads AHTAVISPQD…SILAGSCLYV (94 aa). N-linked (GlcNAc...) asparagine glycans are attached at residues asparagine 92, asparagine 104, and asparagine 140. 2 Fibronectin type-III domains span residues 137–232 and 237–341; these read KPVN…ILDV and PPPD…TPRS. Cysteine 143 and cysteine 153 form a disulfide bridge. Asparagine 168 carries an N-linked (GlcNAc...) asparagine glycan. The cysteines at positions 184 and 195 are disulfide-linked. Serine 219 bears the Phosphoserine mark. Residue asparagine 292 is glycosylated (N-linked (GlcNAc...) asparagine). A WSXWS motif motif is present at residues 327–331; it reads WSEWS. A disordered region spans residues 332-363; the sequence is HPTAASTPRSERPGPGGGACEPRGGEPSSGPV. The N-linked (GlcNAc...) asparagine glycan is linked to asparagine 382. Residues 399-422 form a disordered region; that stretch reads HKTRNQDEGILPSGRRGTARGPAR.

This sequence belongs to the type I cytokine receptor family. Type 3 subfamily. Forms covalent di- and tetramers. Forms a heteromeric complex with cardiotrophin-like cytokine CLCF1/CLC; the CRLF1-CLCF1 complex is a ligand for the ciliary neurotrophic factor receptor/CNTFR. The CRLF1-CLCF1 heterodimer binds SORL1 (via N-terminal ectodomain); within this complex, the interaction is mediated predominantly by the CRLF1 moiety. The tripartite signaling complex formed by CRLF1, CLCF1 and CNTFR also binds SORL1. In terms of tissue distribution, highest levels of expression observed in spleen, thymus, lymph node, appendix, bone marrow, stomach, placenta, heart, thyroid and ovary. Strongly expressed also in fetal lung.

Its subcellular location is the secreted. In terms of biological role, in complex with CLCF1, forms a heterodimeric neurotropic cytokine that plays a crucial role during neuronal development. May also play a regulatory role in the immune system. This chain is Cytokine receptor-like factor 1 (CRLF1), found in Homo sapiens (Human).